A 518-amino-acid chain; its full sequence is NADH-quinone oxidoreductase subunit N (518 aa).

Helical transmembrane passes span 18–38 (FRPE…DLVF), 45–65 (VALL…LLAI), 82–102 (AFAI…VIIA), 113–133 (IGQF…MASA), 136–156 (LLMV…LAGF), 171–191 (VIYG…LYGL), 220–240 (VALV…VAAV), 254–274 (PTPF…ALAI), 295–315 (LAGI…MTLG), 328–348 (LLAY…SAVS), 355–375 (VMIY…VVIL), 399–419 (AVAF…AGFV), 439–459 (WYAW…YYYV), and 486–506 (VMLG…TPMV).

This sequence belongs to the complex I subunit 2 family. NDH-1 is composed of 14 different subunits. Subunits NuoA, H, J, K, L, M, N constitute the membrane sector of the complex.

It localises to the cell inner membrane. The catalysed reaction is a quinone + NADH + 5 H(+)(in) = a quinol + NAD(+) + 4 H(+)(out). Functionally, NDH-1 shuttles electrons from NADH, via FMN and iron-sulfur (Fe-S) centers, to quinones in the respiratory chain. The immediate electron acceptor for the enzyme in this species is believed to be ubiquinone. Couples the redox reaction to proton translocation (for every two electrons transferred, four hydrogen ions are translocated across the cytoplasmic membrane), and thus conserves the redox energy in a proton gradient. The polypeptide is NADH-quinone oxidoreductase subunit N (Anaeromyxobacter sp. (strain Fw109-5)).